A 326-amino-acid chain; its full sequence is Glutaminase 2 (326 aa).

7 residues coordinate substrate: Ser-73, Asn-125, Glu-169, Asn-176, Tyr-200, Tyr-252, and Val-270.

Belongs to the glutaminase family. As to quaternary structure, homotetramer.

The catalysed reaction is L-glutamine + H2O = L-glutamate + NH4(+). This Bacillus anthracis protein is Glutaminase 2.